Reading from the N-terminus, the 366-residue chain is Chorismate synthase (366 aa).

Residues Arg-48 and Arg-54 each coordinate NADP(+). Residues Arg-125 to Ser-127, Asn-238 to Ala-239, Gly-278, Lys-293 to Ser-297, and Arg-319 each bind FMN.

It belongs to the chorismate synthase family. As to quaternary structure, homotetramer. FMNH2 is required as a cofactor.

The enzyme catalyses 5-O-(1-carboxyvinyl)-3-phosphoshikimate = chorismate + phosphate. Its pathway is metabolic intermediate biosynthesis; chorismate biosynthesis; chorismate from D-erythrose 4-phosphate and phosphoenolpyruvate: step 7/7. In terms of biological role, catalyzes the anti-1,4-elimination of the C-3 phosphate and the C-6 proR hydrogen from 5-enolpyruvylshikimate-3-phosphate (EPSP) to yield chorismate, which is the branch point compound that serves as the starting substrate for the three terminal pathways of aromatic amino acid biosynthesis. This reaction introduces a second double bond into the aromatic ring system. The polypeptide is Chorismate synthase (Burkholderia cenocepacia (strain HI2424)).